The following is a 338-amino-acid chain: D-erythrose-4-phosphate dehydrogenase (338 aa).

Position 12–13 (12–13 (RI)) interacts with NAD(+). Substrate-binding positions include 154-156 (SCT), arginine 200, 213-214 (TK), and arginine 236. Cysteine 155 acts as the Nucleophile in catalysis. Asparagine 318 serves as a coordination point for NAD(+).

It belongs to the glyceraldehyde-3-phosphate dehydrogenase family. Epd subfamily. In terms of assembly, homotetramer.

Its subcellular location is the cytoplasm. The catalysed reaction is D-erythrose 4-phosphate + NAD(+) + H2O = 4-phospho-D-erythronate + NADH + 2 H(+). Its pathway is cofactor biosynthesis; pyridoxine 5'-phosphate biosynthesis; pyridoxine 5'-phosphate from D-erythrose 4-phosphate: step 1/5. Functionally, catalyzes the NAD-dependent conversion of D-erythrose 4-phosphate to 4-phosphoerythronate. The chain is D-erythrose-4-phosphate dehydrogenase from Pectobacterium atrosepticum (strain SCRI 1043 / ATCC BAA-672) (Erwinia carotovora subsp. atroseptica).